Here is a 351-residue protein sequence, read N- to C-terminus: MMEAEEQPWKTTFYSKLPKVELHAHLNGSISSNTIRKLIAKKPDLKIHDQMTMIDKGEKRTLEECLQMFQIIHLLTTTPEDVLMVTKDVIKEFADDGVKYLELRSTPRGEDATGMTKKTYVESILEGIKQSKEENVDIDVRYLISIDRRGGSSAAKEAVKLAEEFFLSAEDTVLGLDLSGDPSAGQAKDFLEPLLEAKKSGLKLALHLSEIPNQKTETQVLLNLFPDRIGHGTFLSSSEEGSPDLVDFVRQHQIPLELCLTSNVKSQTVPAYDQHHFGFWYSVAHPAVICTDDKGVFATRLSQEYQLVAETFHLTQSQVWDLSYESISYIFASDSTKADLRKKWSHLKPHF.

The Zn(2+) site is built by histidine 23 and histidine 25. Residues histidine 25, asparagine 27, histidine 73, 105–108 (STPR), aspartate 147, and glycine 180 contribute to the N(6)-methyl-AMP site. A Zn(2+)-binding site is contributed by histidine 207. Glutamate 210, aspartate 292, and aspartate 293 together coordinate N(6)-methyl-AMP. The active-site Proton donor is glutamate 210. Residue aspartate 292 coordinates Zn(2+).

The protein belongs to the metallo-dependent hydrolases superfamily. Adenosine and AMP deaminases family. As to quaternary structure, monomer. It depends on Zn(2+) as a cofactor.

The catalysed reaction is N(6)-methyl-AMP + H2O + H(+) = IMP + methylamine. Its function is as follows. Catalyzes the hydrolysis of the free cytosolic methylated adenosine nucleotide N(6)-methyl-AMP (N6-mAMP) to produce inositol monophosphate (IMP) and methylamine. Is required for the catabolism of cytosolic N6-mAMP, which is derived from the degradation of mRNA containing N6-methylated adenine (m6A). The protein is N6-Methyl-AMP deaminase of Bos taurus (Bovine).